We begin with the raw amino-acid sequence, 68 residues long: Venom-like beta-defensin (68 aa).

The first 24 residues, 1-24, serve as a signal peptide directing secretion; sequence MRLLILFLAVVTLLSLAGPGSAEV. 3 disulfides stabilise this stretch: Cys-33/Cys-60, Cys-40/Cys-54, and Cys-47/Cys-61.

As to expression, highly expressed in intestine, liver and spleen and expressed at lower levels in brain, kidney, lung, testis and venom gland.

It is found in the secreted. Functionally, potent antimicrobial peptide that displays activity against S.aureus and P.aeruginosa. Does not inhibit growth of E.coli. The protein is Venom-like beta-defensin of Ornithorhynchus anatinus (Duckbill platypus).